Here is a 312-residue protein sequence, read N- to C-terminus: Pantothenate kinase (312 aa).

Residue 97 to 104 (GSVAVGKS) participates in ATP binding.

The protein belongs to the prokaryotic pantothenate kinase family.

Its subcellular location is the cytoplasm. The enzyme catalyses (R)-pantothenate + ATP = (R)-4'-phosphopantothenate + ADP + H(+). The protein operates within cofactor biosynthesis; coenzyme A biosynthesis; CoA from (R)-pantothenate: step 1/5. The polypeptide is Pantothenate kinase (Mycolicibacterium vanbaalenii (strain DSM 7251 / JCM 13017 / BCRC 16820 / KCTC 9966 / NRRL B-24157 / PYR-1) (Mycobacterium vanbaalenii)).